Here is a 519-residue protein sequence, read N- to C-terminus: Cytochrome P450 709B1 (519 aa).

The helical transmembrane segment at 1–21 threads the bilayer; it reads MGLVIFLALIVLILIIGLRIF. Position 464 (Cys464) interacts with heme.

The protein belongs to the cytochrome P450 family. Heme is required as a cofactor. As to expression, highly expressed in siliques.

It is found in the membrane. Its function is as follows. Involved in stress response. Does not function as cytokinin hydroxylase in yeast heterologous system. The sequence is that of Cytochrome P450 709B1 from Arabidopsis thaliana (Mouse-ear cress).